We begin with the raw amino-acid sequence, 287 residues long: Protein-export membrane protein SecF (287 aa).

Transmembrane regions (helical) follow at residues 21–41 (LIAIPAAITVIALLLVVFNGL), 129–149 (QIYWAIGFAFLFMSVTVFIIF), 158–178 (VILAAASDIIIAVGGMSLFGI), 182–202 (LASVGAILMLIGYSVDTDILL), 226–246 (VTMSIAAIASMAALYLVTVFV), and 259–279 (VLIIGLLADILTTWLMNLGIL).

This sequence belongs to the SecD/SecF family. SecF subfamily. As to quaternary structure, part of the protein translocation apparatus. Forms a complex with SecD.

It localises to the cell membrane. Its function is as follows. Involved in protein export. This is Protein-export membrane protein SecF from Methanothermobacter thermautotrophicus (strain ATCC 29096 / DSM 1053 / JCM 10044 / NBRC 100330 / Delta H) (Methanobacterium thermoautotrophicum).